Here is a 429-residue protein sequence, read N- to C-terminus: UPF0597 protein AHA_1619 (429 aa).

It belongs to the UPF0597 family.

The protein is UPF0597 protein AHA_1619 of Aeromonas hydrophila subsp. hydrophila (strain ATCC 7966 / DSM 30187 / BCRC 13018 / CCUG 14551 / JCM 1027 / KCTC 2358 / NCIMB 9240 / NCTC 8049).